Reading from the N-terminus, the 655-residue chain is p-hydroxybenzoic acid efflux pump subunit AaeB (655 aa).

A run of 11 helical transmembrane segments spans residues 13–33 (FAVK…HFQL), 38–58 (WAVL…GGEP), 69–89 (LRII…ILMI), 93–113 (LLMV…SSLV), 121–141 (WGLA…EPLL), 152–172 (EIVI…PRSI), 370–390 (LFWL…IAVV), 407–427 (FLYG…VILP), 431–451 (QSML…GIEV), 459–479 (LGAL…TFHF), and 482–502 (FLDS…VILL).

The protein belongs to the aromatic acid exporter ArAE (TC 2.A.85) family.

Its subcellular location is the cell inner membrane. In terms of biological role, forms an efflux pump with AaeA. Could function as a metabolic relief valve, allowing to eliminate certain compounds when they accumulate to high levels in the cell. This is p-hydroxybenzoic acid efflux pump subunit AaeB from Enterobacter cloacae subsp. cloacae (strain ATCC 13047 / DSM 30054 / NBRC 13535 / NCTC 10005 / WDCM 00083 / NCDC 279-56).